An 87-amino-acid polypeptide reads, in one-letter code: Toxin Cll5c (87 aa).

Residues 1 to 19 form the signal peptide; sequence MNSLLMITACLVLFGTVWA. The 66-residue stretch at 20 to 85 folds into the LCN-type CS-alpha/beta domain; the sequence is KEGYLVNKST…TYPLPNKSCS (66 aa). Intrachain disulfides connect Cys31–Cys84, Cys35–Cys60, Cys44–Cys65, and Cys48–Cys67. Positions 86-87 are cleaved as a propeptide — removed by a carboxypeptidase; sequence KK.

Belongs to the long (4 C-C) scorpion toxin superfamily. Sodium channel inhibitor family. Beta subfamily. Expressed by the venom gland.

The protein resides in the secreted. Its function is as follows. Beta toxins bind voltage-independently at site-4 of sodium channels (Nav) and shift the voltage of activation toward more negative potentials thereby affecting sodium channel activation and promoting spontaneous and repetitive firing. This is Toxin Cll5c from Centruroides limpidus (Mexican scorpion).